The sequence spans 353 residues: Serine proteinase inhibitor 1 (353 aa).

The protein belongs to the serpin family. Poxviruses subfamily.

It is found in the host cytoplasm. In terms of biological role, plays a role in mediating viral host range. May act to inhibit a caspase independent form of apoptosis to allow efficient virus replication in infected cells. The polypeptide is Serine proteinase inhibitor 1 (OPG208) (Vaccinia virus (strain Copenhagen) (VACV)).